The sequence spans 217 residues: MGQKINPIGLRVGVIRDWEAKWYAEKDFASLLHEDLKIRKYIDNALQEASVSHVEIERAANRINIAIHTGKPGMVIGKGGSEIEKLRNKLNSLTNKKVHINVIEIKKVDLDAKLVAENIARQLENRASFRRVQKQAITRAMKIGAKGIKTQVSGRLGGADIARAEQYSEGTVPLHTLRADIGYAHAEADTTYGKLGVKVWIYRGEVLPTKNTSEGGK.

Residues 38 to 106 (IRKYIDNALQ…KVHINVIEIK (69 aa)) enclose the KH type-2 domain.

This sequence belongs to the universal ribosomal protein uS3 family. As to quaternary structure, part of the 30S ribosomal subunit. Forms a tight complex with proteins S10 and S14.

Functionally, binds the lower part of the 30S subunit head. Binds mRNA in the 70S ribosome, positioning it for translation. The protein is Small ribosomal subunit protein uS3 of Staphylococcus saprophyticus subsp. saprophyticus (strain ATCC 15305 / DSM 20229 / NCIMB 8711 / NCTC 7292 / S-41).